A 557-amino-acid polypeptide reads, in one-letter code: Laccase-11 (557 aa).

The first 23 residues, 1–23 (MKMGFLFLFCYLLAFLGYSPVDA), serve as a signal peptide directing secretion. 2 Plastocyanin-like domains span residues 31–147 (DVQV…PAPG) and 158–308 (ESNI…YKGV). Residues N36, N69, and N77 are each glycosylated (N-linked (GlcNAc...) asparagine). Residues H81 and H83 each coordinate Cu cation. N115 carries N-linked (GlcNAc...) asparagine glycosylation. Cu cation-binding residues include H126 and H128. 8 N-linked (GlcNAc...) asparagine glycosylation sites follow: N240, N296, N323, N371, N381, N398, N416, and N440. In terms of domain architecture, Plastocyanin-like 3 spans 406-541 (DFPDRPPKAF…KMAFVVENGE (136 aa)). The Cu cation site is built by H458, H461, H463, H520, C521, H522, and H526.

It belongs to the multicopper oxidase family. Cu cation serves as cofactor. Ubiquitous and constitutive.

The protein localises to the secreted. Its subcellular location is the extracellular space. The protein resides in the apoplast. It catalyses the reaction 4 hydroquinone + O2 = 4 benzosemiquinone + 2 H2O. Lignin degradation and detoxification of lignin-derived products. The protein is Laccase-11 (LAC11) of Arabidopsis thaliana (Mouse-ear cress).